Here is a 464-residue protein sequence, read N- to C-terminus: tRNA-2-methylthio-N(6)-dimethylallyladenosine synthase (464 aa).

Residues Arg-5 to Asp-122 enclose the MTTase N-terminal domain. The [4Fe-4S] cluster site is built by Cys-14, Cys-50, Cys-85, Cys-163, Cys-167, and Cys-170. The Radical SAM core domain occupies Lys-149 to Asp-383. Residues Arg-384 to Asp-446 enclose the TRAM domain.

It belongs to the methylthiotransferase family. MiaB subfamily. In terms of assembly, monomer. Requires [4Fe-4S] cluster as cofactor.

The protein resides in the cytoplasm. It catalyses the reaction N(6)-dimethylallyladenosine(37) in tRNA + (sulfur carrier)-SH + AH2 + 2 S-adenosyl-L-methionine = 2-methylsulfanyl-N(6)-dimethylallyladenosine(37) in tRNA + (sulfur carrier)-H + 5'-deoxyadenosine + L-methionine + A + S-adenosyl-L-homocysteine + 2 H(+). Its function is as follows. Catalyzes the methylthiolation of N6-(dimethylallyl)adenosine (i(6)A), leading to the formation of 2-methylthio-N6-(dimethylallyl)adenosine (ms(2)i(6)A) at position 37 in tRNAs that read codons beginning with uridine. The polypeptide is tRNA-2-methylthio-N(6)-dimethylallyladenosine synthase (Azorhizobium caulinodans (strain ATCC 43989 / DSM 5975 / JCM 20966 / LMG 6465 / NBRC 14845 / NCIMB 13405 / ORS 571)).